The primary structure comprises 1268 residues: uncharacterized protein (1268 aa).

The segment covering 191–206 (KIVSVKPSKSSQQVDV) has biased composition (low complexity). 2 disordered regions span residues 191 to 235 (KIVS…SKKK) and 253 to 273 (NCRSNPKTGNQGGNKGKSKGC). The span at 223–235 (RKPEKSSQDSKKK) shows a compositional bias: basic and acidic residues. The CCHC-type zinc-finger motif lies at 239–256 (PTCFYCNKKGHYATNCRS). Positions 465–644 (EMGVIVPITY…KQVTFLGFVD (180 aa)) constitute a Reverse transcriptase domain. Positions 844 to 997 (VPEAPWKRIH…TPAECHFGRK (154 aa)) constitute an Integrase catalytic domain. The segment at 1092–1268 (GDYSRSSVNP…RRERVRTTWR (177 aa)) is disordered. Polar residues-rich tracts occupy residues 1127–1143 (VTSNGSSTDVNRGSRIT) and 1160–1169 (GSCSPTNNDV). Low complexity predominate over residues 1208–1221 (PSTSTGTPRGSTST). Residues 1222-1249 (QLGQASTRNGSRYTASGRNPSCQGNRYS) are compositionally biased toward polar residues. Over residues 1257–1268 (TARRERVRTTWR) the composition is skewed to basic and acidic residues.

This is an uncharacterized protein from Caenorhabditis elegans.